Reading from the N-terminus, the 177-residue chain is Pyruvate synthase subunit PorC (177 aa).

In terms of assembly, heterotetramer of one alpha, one beta, one delta and one gamma chain.

It catalyses the reaction 2 oxidized [2Fe-2S]-[ferredoxin] + pyruvate + CoA = 2 reduced [2Fe-2S]-[ferredoxin] + acetyl-CoA + CO2 + H(+). This Methanothermobacter marburgensis (strain ATCC BAA-927 / DSM 2133 / JCM 14651 / NBRC 100331 / OCM 82 / Marburg) (Methanobacterium thermoautotrophicum) protein is Pyruvate synthase subunit PorC (porC).